Here is a 199-residue protein sequence, read N- to C-terminus: Transgelin-3 (199 aa).

Residues 24–136 (ADLENKLVDW…RTLMALGSVA (113 aa)) enclose the Calponin-homology (CH) domain. A Phosphoserine modification is found at S163. The Calponin-like repeat unit spans residues 174-199 (IGLQMGSNKGASQAGMTGYGMPRQIM). Over residues 176-188 (LQMGSNKGASQAG) the composition is skewed to polar residues. The segment at 176 to 199 (LQMGSNKGASQAGMTGYGMPRQIM) is disordered.

Belongs to the calponin family.

In Pongo abelii (Sumatran orangutan), this protein is Transgelin-3 (TAGLN3).